Consider the following 832-residue polypeptide: Subtilisin-like protease SBT2.1 (832 aa).

The N-terminal stretch at 1–24 (MDESSLVRFVFLLCLVSSSVFCLA) is a signal peptide. A propeptide spans 25 to 138 (ESDQNATVSS…VVLDFLVEKA (114 aa)) (activation peptide). N29 and N73 each carry an N-linked (GlcNAc...) asparagine glycan. The Inhibitor I9 domain maps to 36–136 (VYIVTLKDRP…ENVVLDFLVE (101 aa)). The 540-residue stretch at 145–684 (FLGLPRGAWL…SGFVNATAAL (540 aa)) folds into the Peptidase S8 domain. Residue D172 is the Charge relay system of the active site. N233 carries N-linked (GlcNAc...) asparagine glycosylation. The active-site Charge relay system is the H247. N272, N315, N390, N417, N470, N515, and N522 each carry an N-linked (GlcNAc...) asparagine glycan. A PA domain is found at 408-503 (LVLATHALRN…MDIPGILISS (96 aa)). The active-site Charge relay system is the S609. N-linked (GlcNAc...) asparagine glycosylation is found at N679, N705, N713, N723, N760, and N801.

It belongs to the peptidase S8 family.

The protein localises to the secreted. In Arabidopsis thaliana (Mouse-ear cress), this protein is Subtilisin-like protease SBT2.1.